The primary structure comprises 88 residues: Large ribosomal subunit protein bL27 (88 aa).

A disordered region spans residues 1 to 24; sequence MATKKSGGSSGNGRDSRGRRLGVK.

It belongs to the bacterial ribosomal protein bL27 family.

This chain is Large ribosomal subunit protein bL27, found in Ehrlichia chaffeensis (strain ATCC CRL-10679 / Arkansas).